Reading from the N-terminus, the 533-residue chain is MTKKRIAVIGGGVSGLSSIKCCVEEGLEPVCFERTDDIGGLWRFQENPEEGRASIYKSVIINTSKEMMCFSDYPIPDHYPNFMHNAQVLEYFRMYAKEFDLLKYIRFKTTVCSVKKQPDFATSGQWEVVTESEGKKEMNVFDGVMVCTGHHTNAHLPLESFPGIEKFKGQYFHSRDYKNPEGFTGKRVIIIGIGNSGGDLAVEISQTAKQVFLSTRRGAWILNRVGDYGYPADVLFSSRLTHFIWKICGQSLANKYLEKKINQRFDHEMFGLKPKHRALSQHPTLNDDLPNRIISGLVKVKGNVKEFTETAAIFEDGSREDDIDAVIFATGYSFDFPFLEDSVKVVKNKISLYKKVFPPNLERPTLAIIGLIQPLGAIMPISELQGRWATQVFKGLKTLPSQSEMMAEISKAQEEIDKRYVESQRHTIQGDYIDTMEELADLVGVRPNLLSLAFTDPKLALHLLLGPCTPIHYRVQGPGKWDGARKAILTTDDRIRKPLMTRVVERSSSMTSTMTIGKFMLALAFFAIIIAYF.

At R5 the chain carries Dimethylated arginine. Residues 10-14, E33, and 41-42 each bind FAD; these read GGGVS and LW. S54 is modified (phosphoserine). A Phosphotyrosine modification is found at Y56. S58 carries the post-translational modification Phosphoserine. 62-63 lines the FAD pocket; it reads NT. 196–199 contacts NADP(+); it reads SGGD. S280 carries the phosphoserine modification. A Phosphothreonine modification is found at T284. Position 401 is a phosphoserine (S401). The helical transmembrane segment at 513-533 threads the bilayer; the sequence is TMTIGKFMLALAFFAIIIAYF.

Belongs to the FMO family. It depends on FAD as a cofactor. Expressed in fetal and adult liver.

The protein resides in the microsome membrane. It localises to the endoplasmic reticulum membrane. It carries out the reaction N,N-dimethylaniline + NADPH + O2 + H(+) = N,N-dimethylaniline N-oxide + NADP(+) + H2O. The catalysed reaction is NADPH + O2 + H(+) = H2O2 + NADP(+). The enzyme catalyses heptan-2-one + NADPH + O2 + H(+) = pentyl acetate + NADP(+) + H2O. It catalyses the reaction octan-3-one + NADPH + O2 + H(+) = pentyl propanoate + NADP(+) + H2O. It carries out the reaction octan-3-one + NADPH + O2 + H(+) = ethyl hexanoate + NADP(+) + H2O. The catalysed reaction is hexan-3-one + NADPH + O2 + H(+) = ethyl butanoate + NADP(+) + H2O. The enzyme catalyses hexan-3-one + NADPH + O2 + H(+) = propyl propanoate + NADP(+) + H2O. It catalyses the reaction heptan-4-one + NADPH + O2 + H(+) = propyl butanoate + NADP(+) + H2O. It carries out the reaction (2E)-geranial + NADPH + O2 + H(+) = (1E)-2,6-dimethylhepta-1,5-dien-1-yl formate + NADP(+) + H2O. The catalysed reaction is sulcatone + NADPH + O2 + H(+) = 4-methylpent-3-en-1-yl acetate + NADP(+) + H2O. Its function is as follows. Acts as a Baeyer-Villiger monooxygenase on a broad range of substrates. Catalyzes the insertion of an oxygen atom into a carbon-carbon bond adjacent to a carbonyl, which converts ketones to esters. Active on diverse carbonyl compounds, whereas soft nucleophiles are mostly non- or poorly reactive. In contrast with other forms of FMO it is non- or poorly active on 'classical' substrates such as drugs, pesticides, and dietary components containing soft nucleophilic heteroatoms. Able to oxidize drug molecules bearing a carbonyl group on an aliphatic chain, such as nabumetone and pentoxifylline. Also, in the absence of substrates, shows slow but yet significant NADPH oxidase activity. Acts as a positive modulator of cholesterol biosynthesis as well as glucose homeostasis, promoting metabolic aging via pleiotropic effects. This is Flavin-containing monooxygenase 5 from Homo sapiens (Human).